A 357-amino-acid chain; its full sequence is Serpentine receptor class epsilon-31 (357 aa).

A run of 7 helical transmembrane segments spans residues 28–48 (VISIFELLSYILCGYILNLSI), 61–81 (LMFLTVPLFAIWYELIIGKFI), 121–141 (LLIFGGFLQWHTIYSIVFGIL), 165–185 (IPIFLIIICQVLAIFMTFIVI), 192–212 (IIARLPFIFLCPISFAVWLFV), 253–273 (LVAVVLVYIMVCFLGIVSLTF), and 283–303 (FVENFLFFHPIPICLTAMFSI).

The protein belongs to the nematode receptor-like protein sre family.

It localises to the membrane. This chain is Serpentine receptor class epsilon-31 (sre-31), found in Caenorhabditis elegans.